The chain runs to 108 residues: Parvalbumin beta (108 aa).

N-acetylalanine is present on Ala-1. A disulfide bridge links Cys-11 with Cys-33. 2 consecutive EF-hand domains span residues 38–73 and 77–108; these read KSAD…FKAG and LTDA…LVKA. Ca(2+) contacts are provided by Asp-51, Asp-53, Ser-55, Phe-57, Glu-59, Glu-62, Asp-90, Asp-92, Asp-94, Ala-96, and Glu-101.

Belongs to the parvalbumin family.

In terms of biological role, in muscle, parvalbumin is thought to be involved in relaxation after contraction. It binds two calcium ions. This chain is Parvalbumin beta, found in Merlangius merlangus (Whiting).